The chain runs to 416 residues: Tryptophan synthase beta chain (416 aa).

Residue Lys-109 is modified to N6-(pyridoxal phosphate)lysine.

Belongs to the TrpB family. In terms of assembly, tetramer of two alpha and two beta chains. It depends on pyridoxal 5'-phosphate as a cofactor.

It catalyses the reaction (1S,2R)-1-C-(indol-3-yl)glycerol 3-phosphate + L-serine = D-glyceraldehyde 3-phosphate + L-tryptophan + H2O. It participates in amino-acid biosynthesis; L-tryptophan biosynthesis; L-tryptophan from chorismate: step 5/5. The beta subunit is responsible for the synthesis of L-tryptophan from indole and L-serine. The protein is Tryptophan synthase beta chain of Mesorhizobium japonicum (strain LMG 29417 / CECT 9101 / MAFF 303099) (Mesorhizobium loti (strain MAFF 303099)).